The primary structure comprises 261 residues: Pimeloyl-[acyl-carrier protein] methyl ester esterase (261 aa).

The AB hydrolase-1 domain maps to 16 to 241 (LVLIHGWGMN…QASHAPFISH (226 aa)). Substrate is bound by residues W22, 82–83 (SL), and 143–147 (FMTLQ). The active-site Nucleophile is the S82. Active-site residues include D207 and H235. H235 is a substrate binding site.

It belongs to the AB hydrolase superfamily. Carboxylesterase BioH family. Monomer.

Its subcellular location is the cytoplasm. It carries out the reaction 6-carboxyhexanoyl-[ACP] methyl ester + H2O = 6-carboxyhexanoyl-[ACP] + methanol + H(+). It functions in the pathway cofactor biosynthesis; biotin biosynthesis. In terms of biological role, the physiological role of BioH is to remove the methyl group introduced by BioC when the pimeloyl moiety is complete. It allows to synthesize pimeloyl-ACP via the fatty acid synthetic pathway through the hydrolysis of the ester bonds of pimeloyl-ACP esters. The chain is Pimeloyl-[acyl-carrier protein] methyl ester esterase from Aliivibrio salmonicida (strain LFI1238) (Vibrio salmonicida (strain LFI1238)).